The sequence spans 289 residues: Rhodopsin (289 aa).

The Extracellular segment spans residues 1-7 (YLVNPAA). A helical transmembrane segment spans residues 8 to 32 (YAALGAYMFLLILIGFPINFLTLYV). The Cytoplasmic segment spans residues 33-44 (TLEHKKLRTPLN). Residues 45 to 67 (YILLNLAVGNLFMVLGGFTTTMY) form a helical membrane-spanning segment. Topologically, residues 68–81 (TSMHGYFVLGRLGC) are extracellular. C81 and C158 form a disulfide bridge. The helical transmembrane segment at 82 to 104 (NLEGFFATLGGEIALWSLVVLAI) threads the bilayer. A 'Ionic lock' involved in activated form stabilization motif is present at residues 105–107 (ERW). At 105 to 123 (ERWIVVCKPISKFRFTEDH) the chain is on the cytoplasmic side. A helical membrane pass occupies residues 124–144 (AIMGLAFSWVMGLACAVPPLV). The Extracellular segment spans residues 145 to 173 (GWSRYIPEGMKCSCGVDYYTRAEGFNNES). N171 is a glycosylation site (N-linked (GlcNAc...) asparagine). The helical transmembrane segment at 174-195 (FVIYMFIVHFLIPLSVIFFCYG) threads the bilayer. At 196–223 (RLLCAVKEAAAAQQESETTQRAEKEVSR) the chain is on the cytoplasmic side. Residues 224-245 (MVVIMVIGFLVCWLPYASVAWW) form a helical membrane-spanning segment. Residues 246 to 257 (IFCNQGSDFGPI) lie on the Extracellular side of the membrane. The helical transmembrane segment at 258-279 (FMTLPSFFAKRPAIYNPMIYIC) threads the bilayer. Position 267 is an N6-(retinylidene)lysine (K267). Topologically, residues 280–289 (MNKQFRHCMI) are cytoplasmic.

It belongs to the G-protein coupled receptor 1 family. Opsin subfamily. In terms of processing, phosphorylated on some or all of the serine and threonine residues present in the C-terminal region. Contains one covalently linked retinal chromophore.

It localises to the membrane. The protein localises to the cell projection. It is found in the cilium. Its subcellular location is the photoreceptor outer segment. Functionally, photoreceptor required for image-forming vision at low light intensity. While most salt water fish species use retinal as chromophore, most freshwater fish use 3-dehydroretinal, or a mixture of retinal and 3-dehydroretinal. Light-induced isomerization of 11-cis to all-trans retinal triggers a conformational change that activates signaling via G-proteins. Subsequent receptor phosphorylation mediates displacement of the bound G-protein alpha subunit by arrestin and terminates signaling. This chain is Rhodopsin (rho), found in Cottinella boulengeri (Short-headed sculpin).